A 461-amino-acid chain; its full sequence is Fumarate hydratase class II (461 aa).

Residues 97–99, 127–130, 137–139, and Thr185 each bind substrate; these read SGT, HPND, and SSN. The Proton donor/acceptor role is filled by His186. Ser316 is an active-site residue. Substrate contacts are provided by residues Ser317 and 322–324; that span reads KVN.

Belongs to the class-II fumarase/aspartase family. Fumarase subfamily. Homotetramer.

It localises to the cytoplasm. It catalyses the reaction (S)-malate = fumarate + H2O. It functions in the pathway carbohydrate metabolism; tricarboxylic acid cycle; (S)-malate from fumarate: step 1/1. In terms of biological role, involved in the TCA cycle. Catalyzes the stereospecific interconversion of fumarate to L-malate. The chain is Fumarate hydratase class II from Staphylococcus epidermidis (strain ATCC 35984 / DSM 28319 / BCRC 17069 / CCUG 31568 / BM 3577 / RP62A).